Consider the following 571-residue polypeptide: Quinone-dependent D-lactate dehydrogenase (571 aa).

Residues 42–213 enclose the FAD-binding PCMH-type domain; sequence GQGDALAVVF…SKLDDDRIKD (172 aa). FAD contacts are provided by residues 76–80, 84–85, Gly-143, Ser-150, Gly-160, and Val-262; these read AANTG and GS. Residues 546–571 form a disordered region; that stretch reads RENDPTNSMNPGIGKTSKRKNWQEVE.

It belongs to the quinone-dependent D-lactate dehydrogenase family. The cofactor is FAD.

It is found in the cell inner membrane. It catalyses the reaction (R)-lactate + a quinone = a quinol + pyruvate. Inhibited by 2-hydroxy-3-butynoic acid, but not by p-chloromercuribenzoate, n-ethylmaleimide, or 5,5'-dithiobis(2-nitrobenzoic acid). In terms of biological role, catalyzes the oxidation of D-lactate to pyruvate. Electrons derived from D-lactate oxidation are transferred to the ubiquinone/cytochrome electron transfer chain, where they may be used to provide energy for the active transport of a variety of amino acids and sugars across the membrane. In Escherichia coli (strain K12), this protein is Quinone-dependent D-lactate dehydrogenase.